A 244-amino-acid chain; its full sequence is 3-oxoacyl-[acyl-carrier-protein] reductase FabG (244 aa).

Residues Gly12–Arg15, Thr37, Asn59–Val60, and Asn86 each bind NADP(+). Residue Ser138 participates in substrate binding. Catalysis depends on Tyr151, which acts as the Proton acceptor. NADP(+) contacts are provided by residues Tyr151–Lys155 and Ile184.

Belongs to the short-chain dehydrogenases/reductases (SDR) family. Homotetramer.

It carries out the reaction a (3R)-hydroxyacyl-[ACP] + NADP(+) = a 3-oxoacyl-[ACP] + NADPH + H(+). The protein operates within lipid metabolism; fatty acid biosynthesis. Functionally, catalyzes the NADPH-dependent reduction of beta-ketoacyl-ACP substrates to beta-hydroxyacyl-ACP products, the first reductive step in the elongation cycle of fatty acid biosynthesis. This is 3-oxoacyl-[acyl-carrier-protein] reductase FabG (fabG) from Vibrio harveyi (Beneckea harveyi).